Reading from the N-terminus, the 1411-residue chain is DNA-directed RNA polymerase subunit beta' (1411 aa).

4 residues coordinate Zn(2+): C70, C72, C85, and C88. Mg(2+) contacts are provided by D458, D460, and D462. Residues C813, C887, C894, and C897 each coordinate Zn(2+). The interval 1391–1411 (AQAEVPELDGSSVTASDAAAD) is disordered.

It belongs to the RNA polymerase beta' chain family. The RNAP catalytic core consists of 2 alpha, 1 beta, 1 beta' and 1 omega subunit. When a sigma factor is associated with the core the holoenzyme is formed, which can initiate transcription. Mg(2+) is required as a cofactor. Requires Zn(2+) as cofactor.

The enzyme catalyses RNA(n) + a ribonucleoside 5'-triphosphate = RNA(n+1) + diphosphate. Functionally, DNA-dependent RNA polymerase catalyzes the transcription of DNA into RNA using the four ribonucleoside triphosphates as substrates. The sequence is that of DNA-directed RNA polymerase subunit beta' from Verminephrobacter eiseniae (strain EF01-2).